The sequence spans 1755 residues: Transposon Ty1-LR3 Gag-Pol polyprotein (1755 aa).

Low complexity predominate over residues Met1 to Ser16. 3 disordered regions span residues Met1 to Gln93, Pro126 to Pro173, and Gly352 to Thr421. 2 stretches are compositionally biased toward polar residues: residues Thr48–Ser60 and Gln127–Phe152. A compositionally biased stretch (low complexity) spans Thr153–Thr165. The interval Asn299–His401 is RNA-binding. The segment covering Asn402–Ser418 has biased composition (low complexity). Ser416 is modified (phosphoserine). Asp461 serves as the catalytic For protease activity; shared with dimeric partner. The segment at Asn583–Cys640 is integrase-type zinc finger-like. An Integrase catalytic domain is found at Asn660–Asp829. Mg(2+) contacts are provided by Asp671 and Asp736. 3 disordered regions span residues Ser956–Lys1087, Arg1092–Pro1111, and Ala1129–Tyr1172. Residues Ser960 to Thr969 show a composition bias toward low complexity. A compositionally biased stretch (polar residues) spans Ser1005–Thr1015. Residues Glu1038–Asp1052 are compositionally biased toward basic and acidic residues. Composition is skewed to polar residues over residues Ser1053–Asp1082 and Pro1101–Pro1111. Positions Lys1178–Arg1212 match the Bipartite nuclear localization signal motif. One can recognise a Reverse transcriptase Ty1/copia-type domain in the interval Asn1338–Gln1476. The Mg(2+) site is built by Asp1346, Asp1427, Asp1428, Asp1610, Glu1652, and Asp1685. The region spanning Asp1610 to Lys1752 is the RNase H Ty1/copia-type domain.

As to quaternary structure, the capsid protein forms a homotrimer, from which the VLPs are assembled. The protease is a homodimer, whose active site consists of two apposed aspartic acid residues. In terms of processing, initially, virus-like particles (VLPs) are composed of the structural unprocessed proteins Gag and Gag-Pol, and also contain the host initiator methionine tRNA (tRNA(i)-Met) which serves as a primer for minus-strand DNA synthesis, and a dimer of genomic Ty RNA. Processing of the polyproteins occurs within the particle and proceeds by an ordered pathway, called maturation. First, the protease (PR) is released by autocatalytic cleavage of the Gag-Pol polyprotein yielding capsid protein p45 and a Pol-p154 precursor protein. This cleavage is a prerequisite for subsequent processing of Pol-p154 at the remaining sites to release the mature structural and catalytic proteins. Maturation takes place prior to the RT reaction and is required to produce transposition-competent VLPs.

Its subcellular location is the cytoplasm. The protein resides in the nucleus. The enzyme catalyses DNA(n) + a 2'-deoxyribonucleoside 5'-triphosphate = DNA(n+1) + diphosphate. The catalysed reaction is Endonucleolytic cleavage to 5'-phosphomonoester.. Functionally, capsid protein (CA) is the structural component of the virus-like particle (VLP), forming the shell that encapsulates the retrotransposons dimeric RNA genome. The particles are assembled from trimer-clustered units and there are holes in the capsid shells that allow for the diffusion of macromolecules. CA also has nucleocapsid-like chaperone activity, promoting primer tRNA(i)-Met annealing to the multipartite primer-binding site (PBS), dimerization of Ty1 RNA and initiation of reverse transcription. In terms of biological role, the aspartyl protease (PR) mediates the proteolytic cleavages of the Gag and Gag-Pol polyproteins after assembly of the VLP. Its function is as follows. Reverse transcriptase/ribonuclease H (RT) is a multifunctional enzyme that catalyzes the conversion of the retro-elements RNA genome into dsDNA within the VLP. The enzyme displays a DNA polymerase activity that can copy either DNA or RNA templates, and a ribonuclease H (RNase H) activity that cleaves the RNA strand of RNA-DNA heteroduplexes during plus-strand synthesis and hydrolyzes RNA primers. The conversion leads to a linear dsDNA copy of the retrotransposon that includes long terminal repeats (LTRs) at both ends. Integrase (IN) targets the VLP to the nucleus, where a subparticle preintegration complex (PIC) containing at least integrase and the newly synthesized dsDNA copy of the retrotransposon must transit the nuclear membrane. Once in the nucleus, integrase performs the integration of the dsDNA into the host genome. The polypeptide is Transposon Ty1-LR3 Gag-Pol polyprotein (TY1B-LR3) (Saccharomyces cerevisiae (strain ATCC 204508 / S288c) (Baker's yeast)).